A 524-amino-acid chain; its full sequence is Alkaline phosphatase, tissue-nonspecific isozyme (524 aa).

An N-terminal signal peptide occupies residues 1 to 17 (MISPFLVLAIGTCLTNS). Residue Asp-60 participates in Mg(2+) binding. The Zn(2+) site is built by Asp-60 and Ser-110. Residue Ser-110 is the Phosphoserine intermediate of the active site. Ser-110 is modified (phosphoserine). Cys-139 and Cys-201 form a disulfide bridge. A glycan (N-linked (GlcNAc...) asparagine) is linked at Asn-140. Thr-173 serves as a coordination point for Mg(2+). The N-linked (GlcNAc...) asparagine glycan is linked to Asn-230. Residue Glu-235 coordinates Ca(2+). Asn-271 carries N-linked (GlcNAc...) asparagine glycosylation. Residues Phe-290 and Glu-291 each coordinate Ca(2+). Asn-303 is a glycosylation site (N-linked (GlcNAc...) asparagine). Residue Asp-306 participates in Ca(2+) binding. Mg(2+) is bound at residue Glu-332. Zn(2+)-binding residues include Asp-337, His-341, Asp-378, and His-379. An N-linked (GlcNAc...) asparagine glycan is attached at Asn-430. His-454 provides a ligand contact to Zn(2+). A disulfide bond links Cys-489 and Cys-497. Gly-501 carries the GPI-anchor amidated glycine lipid modification. A propeptide spans 502–524 (SGSAPSPGALLLPLAVLSLRTLF) (removed in mature form).

It belongs to the alkaline phosphatase family. As to quaternary structure, homodimer. Mg(2+) serves as cofactor. The cofactor is Zn(2+). It depends on Ca(2+) as a cofactor. In terms of processing, N-glycosylated. Widely expressed. Expressed in DRG neurons and spinal cord neurons.

The protein localises to the cell membrane. The protein resides in the extracellular vesicle membrane. Its subcellular location is the mitochondrion membrane. It localises to the mitochondrion intermembrane space. The enzyme catalyses a phosphate monoester + H2O = an alcohol + phosphate. It catalyses the reaction diphosphate + H2O = 2 phosphate + H(+). The catalysed reaction is pyridoxal 5'-phosphate + H2O = pyridoxal + phosphate. It carries out the reaction phosphoethanolamine + H2O = ethanolamine + phosphate. The enzyme catalyses N-phosphocreatine + H2O = creatine + phosphate. It catalyses the reaction ATP + H2O = ADP + phosphate + H(+). The catalysed reaction is ADP + H2O = AMP + phosphate + H(+). It carries out the reaction AMP + H2O = adenosine + phosphate. With respect to regulation, phosphatase activity is specifically inhibited by 5-((5-chloro-2-methoxyphenyl)sulfonamido)nicotinamide (SBI-425). In terms of biological role, alkaline phosphatase that metabolizes various phosphate compounds and plays a key role in skeletal mineralization and adaptive thermogenesis. Has broad substrate specificity and can hydrolyze a considerable variety of compounds: however, only a few substrates, such as diphosphate (inorganic pyrophosphate; PPi), pyridoxal 5'-phosphate (PLP) and N-phosphocreatine are natural substrates. Plays an essential role in skeletal and dental mineralization via its ability to hydrolyze extracellular diphosphate, a potent mineralization inhibitor, to phosphate: it thereby promotes hydroxyapatite crystal formation and increases inorganic phosphate concentration. Acts in a non-redundant manner with PHOSPHO1 in skeletal mineralization: while PHOSPHO1 mediates the initiation of hydroxyapatite crystallization in the matrix vesicles (MVs), ALPL/TNAP catalyzes the spread of hydroxyapatite crystallization in the extracellular matrix. Also promotes dephosphorylation of osteopontin (SSP1), an inhibitor of hydroxyapatite crystallization in its phosphorylated state; it is however unclear whether ALPL/TNAP mediates SSP1 dephosphorylation via a direct or indirect manner. Catalyzes dephosphorylation of PLP to pyridoxal (PL), the transportable form of vitamin B6, in order to provide a sufficient amount of PLP in the brain, an essential cofactor for enzymes catalyzing the synthesis of diverse neurotransmitters. Additionally, also able to mediate ATP degradation in a stepwise manner to adenosine, thereby regulating the availability of ligands for purinergic receptors. Also capable of dephosphorylating microbial products, such as lipopolysaccharides (LPS) as well as other phosphorylated small-molecules, such as poly-inosine:cytosine (poly I:C). Acts as a key regulator of adaptive thermogenesis as part of the futile creatine cycle: localizes to the mitochondria of thermogenic fat cells and acts by mediating hydrolysis of N-phosphocreatine to initiate a futile cycle of creatine dephosphorylation and phosphorylation. During the futile creatine cycle, creatine and N-phosphocreatine are in a futile cycle, which dissipates the high energy charge of N-phosphocreatine as heat without performing any mechanical or chemical work. The chain is Alkaline phosphatase, tissue-nonspecific isozyme from Mus musculus (Mouse).